Consider the following 254-residue polypeptide: Serine acetyltransferase (254 aa).

The protein belongs to the transferase hexapeptide repeat family.

It localises to the cytoplasm. It catalyses the reaction L-serine + acetyl-CoA = O-acetyl-L-serine + CoA. It functions in the pathway amino-acid biosynthesis; L-cysteine biosynthesis; L-cysteine from L-serine: step 1/2. The protein is Serine acetyltransferase (cysE) of Buchnera aphidicola subsp. Baizongia pistaciae (strain Bp).